The primary structure comprises 532 residues: Phosphoenolpyruvate carboxylase (532 aa).

This sequence belongs to the PEPCase type 2 family. In terms of assembly, homotetramer. Mg(2+) serves as cofactor.

It catalyses the reaction oxaloacetate + phosphate = phosphoenolpyruvate + hydrogencarbonate. In terms of biological role, catalyzes the irreversible beta-carboxylation of phosphoenolpyruvate (PEP) to form oxaloacetate (OAA), a four-carbon dicarboxylic acid source for the tricarboxylic acid cycle. This is Phosphoenolpyruvate carboxylase from Methanopyrus kandleri (strain AV19 / DSM 6324 / JCM 9639 / NBRC 100938).